The sequence spans 211 residues: Uracil phosphoribosyltransferase (211 aa).

5-phospho-alpha-D-ribose 1-diphosphate contacts are provided by residues Arg77, Arg102, and 129–137 (DPMLATGGS). Uracil-binding positions include Ile192 and 197–199 (GDA). A 5-phospho-alpha-D-ribose 1-diphosphate-binding site is contributed by Asp198.

This sequence belongs to the UPRTase family. It depends on Mg(2+) as a cofactor.

The enzyme catalyses UMP + diphosphate = 5-phospho-alpha-D-ribose 1-diphosphate + uracil. Its pathway is pyrimidine metabolism; UMP biosynthesis via salvage pathway; UMP from uracil: step 1/1. With respect to regulation, allosterically activated by GTP. In terms of biological role, catalyzes the conversion of uracil and 5-phospho-alpha-D-ribose 1-diphosphate (PRPP) to UMP and diphosphate. The polypeptide is Uracil phosphoribosyltransferase (Corynebacterium efficiens (strain DSM 44549 / YS-314 / AJ 12310 / JCM 11189 / NBRC 100395)).